We begin with the raw amino-acid sequence, 433 residues long: Signal recognition particle 54 kDa protein (433 aa).

Residues 100 to 107 (GLQGSGKT), 180 to 184 (DTAGR), and 238 to 241 (TKFD) each bind GTP.

It belongs to the GTP-binding SRP family. SRP54 subfamily. As to quaternary structure, part of the signal recognition particle protein translocation system, which is composed of SRP and FtsY. Archaeal SRP consists of a 7S RNA molecule of 300 nucleotides and two protein subunits: SRP54 and SRP19.

It localises to the cytoplasm. The enzyme catalyses GTP + H2O = GDP + phosphate + H(+). Functionally, involved in targeting and insertion of nascent membrane proteins into the cytoplasmic membrane. Binds to the hydrophobic signal sequence of the ribosome-nascent chain (RNC) as it emerges from the ribosomes. The SRP-RNC complex is then targeted to the cytoplasmic membrane where it interacts with the SRP receptor FtsY. The sequence is that of Signal recognition particle 54 kDa protein from Archaeoglobus fulgidus (strain ATCC 49558 / DSM 4304 / JCM 9628 / NBRC 100126 / VC-16).